Reading from the N-terminus, the 179-residue chain is Large ribosomal subunit protein uL5 (179 aa).

It belongs to the universal ribosomal protein uL5 family. As to quaternary structure, part of the 50S ribosomal subunit; part of the 5S rRNA/L5/L18/L25 subcomplex. Contacts the 5S rRNA and the P site tRNA. Forms a bridge to the 30S subunit in the 70S ribosome.

Functionally, this is one of the proteins that bind and probably mediate the attachment of the 5S RNA into the large ribosomal subunit, where it forms part of the central protuberance. In the 70S ribosome it contacts protein S13 of the 30S subunit (bridge B1b), connecting the 2 subunits; this bridge is implicated in subunit movement. Contacts the P site tRNA; the 5S rRNA and some of its associated proteins might help stabilize positioning of ribosome-bound tRNAs. This Salmonella agona (strain SL483) protein is Large ribosomal subunit protein uL5.